The primary structure comprises 381 residues: Alkanesulfonate monooxygenase (381 aa).

It belongs to the SsuD family. As to quaternary structure, homotetramer.

It catalyses the reaction an alkanesulfonate + FMNH2 + O2 = an aldehyde + FMN + sulfite + H2O + 2 H(+). Its function is as follows. Catalyzes the desulfonation of aliphatic sulfonates. This chain is Alkanesulfonate monooxygenase, found in Escherichia coli (strain SE11).